The chain runs to 1140 residues: DNA damage-binding protein 1 (1140 aa).

This sequence belongs to the DDB1 family. In terms of assembly, component of the UV-DDB complex which includes DDB1 and DDB2; the heterodimer dimerizes to give rise to a heterotetramer when bound to damaged DNA. The UV-DDB complex interacts with monoubiquitinated histone H2A and binds to XPC via the DDB2 subunit. Component of numerous DCX (DDB1-CUL4-X-box) E3 ubiquitin-protein ligase complexes which consist of a core of DDB1, CUL4A or CUL4B and RBX1. DDB1 may recruit specific substrate targeting subunits to the DCX complex. These substrate targeting subunits are generally known as DCAF (DDB1- and CUL4-associated factor) or CDW (CUL4-DDB1-associated WD40-repeat) proteins. Interacts with Fbw5 and gig. May interact with ohgt.

Its subcellular location is the cytoplasm. It localises to the nucleus. Its pathway is protein modification; protein ubiquitination. In terms of biological role, protein, which is both involved in DNA repair and protein ubiquitination, as part of the UV-DDB complex and DCX (DDB1-CUL4-X-box) complexes, respectively. Core component of the UV-DDB complex (UV-damaged DNA-binding protein complex), a complex that recognizes UV-induced DNA damage and recruit proteins of the nucleotide excision repair pathway (the NER pathway) to initiate DNA repair. The UV-DDB complex preferentially binds to cyclobutane pyrimidine dimers (CPD), 6-4 photoproducts (6-4 PP), apurinic sites and short mismatches. Also functions as a component of numerous distinct DCX (DDB1-CUL4-X-box) E3 ubiquitin-protein ligase complexes which mediate the ubiquitination and subsequent proteasomal degradation of target proteins. The functional specificity of the DCX E3 ubiquitin-protein ligase complex is determined by the variable substrate recognition component recruited by DDB1. Required for degradation of gig. Required for genomic stability in the face of endogenous DNA lesions and for the response to MMS-induced DNA damage. Required for normal wing development. The polypeptide is DNA damage-binding protein 1 (pic) (Drosophila melanogaster (Fruit fly)).